Consider the following 753-residue polypeptide: Eukaryotic translation initiation factor 3 subunit B (753 aa).

The region spanning 42–129 is the RRM domain; the sequence is TMLVVDNIPI…NVLHVNRFGD (88 aa). WD repeat units lie at residues 142-185, 203-241, 321-362, 537-580, and 595-640; these read DLPS…WWNG, NSKW…GPIG, DTQS…LLDR, LDSK…DERR, and GEHY…LLHE. Residues 723–753 adopt a coiled-coil conformation; that stretch reads KSKAKIDVKGQEARVEEWVEELIDETEELSM.

Belongs to the eIF-3 subunit B family. In terms of assembly, component of the eukaryotic translation initiation factor 3 (eIF-3) complex.

It is found in the cytoplasm. Its function is as follows. RNA-binding component of the eukaryotic translation initiation factor 3 (eIF-3) complex, which is involved in protein synthesis of a specialized repertoire of mRNAs and, together with other initiation factors, stimulates binding of mRNA and methionyl-tRNAi to the 40S ribosome. The eIF-3 complex specifically targets and initiates translation of a subset of mRNAs involved in cell proliferation. The chain is Eukaryotic translation initiation factor 3 subunit B from Cryptococcus neoformans var. neoformans serotype D (strain B-3501A) (Filobasidiella neoformans).